The chain runs to 124 residues: Large ribosomal subunit protein bL12 (124 aa).

Belongs to the bacterial ribosomal protein bL12 family. As to quaternary structure, homodimer. Part of the ribosomal stalk of the 50S ribosomal subunit. Forms a multimeric L10(L12)X complex, where L10 forms an elongated spine to which 2 to 4 L12 dimers bind in a sequential fashion. Binds GTP-bound translation factors.

Forms part of the ribosomal stalk which helps the ribosome interact with GTP-bound translation factors. Is thus essential for accurate translation. The chain is Large ribosomal subunit protein bL12 from Burkholderia ambifaria (strain MC40-6).